The primary structure comprises 77 residues: Exodeoxyribonuclease 7 small subunit (77 aa).

Belongs to the XseB family. Heterooligomer composed of large and small subunits.

The protein resides in the cytoplasm. The enzyme catalyses Exonucleolytic cleavage in either 5'- to 3'- or 3'- to 5'-direction to yield nucleoside 5'-phosphates.. Its function is as follows. Bidirectionally degrades single-stranded DNA into large acid-insoluble oligonucleotides, which are then degraded further into small acid-soluble oligonucleotides. The polypeptide is Exodeoxyribonuclease 7 small subunit (Clostridium acetobutylicum (strain ATCC 824 / DSM 792 / JCM 1419 / IAM 19013 / LMG 5710 / NBRC 13948 / NRRL B-527 / VKM B-1787 / 2291 / W)).